The sequence spans 817 residues: Verprolin (817 aa).

Positions 1–15 (MAGAPAPPPPPPPPA) are enriched in pro residues. A disordered region spans residues 1–752 (MAGAPAPPPP…THTNQPDVDV (752 aa)). Positions 30–47 (GRDALLGDIRKGMKLKKA) constitute a WH2 1 domain. Residues 37-51 (DIRKGMKLKKAETND) are compositionally biased toward basic and acidic residues. The span at 62–79 (VSSASGSSGTVSSKGPSM) shows a compositional bias: low complexity. The WH2 2 domain maps to 87-106 (MGAPQLGDILAGGIPKLKHI). An N-linked (GlcNAc...) asparagine glycan is attached at asparagine 109. The segment covering 119-180 (SAPPIPGAVP…VPSSPAPPLP (62 aa)) has biased composition (pro residues). A glycan (N-linked (GlcNAc...) asparagine) is linked at asparagine 212. The segment covering 236–245 (PQAPPPPPTP) has biased composition (pro residues). Residues 254–265 (IKPTDNAVSPPS) are compositionally biased toward polar residues. Over residues 306 to 335 (SQPPLPSSAPPIPTSHAPPLPPTAPPPPSL) the composition is skewed to pro residues. Over residues 336–348 (PNVTSAPKKATSA) the composition is skewed to low complexity. Asparagine 337 carries N-linked (GlcNAc...) asparagine glycosylation. Positions 372-382 (PVPPTLAPPLP) are enriched in pro residues. Residue asparagine 383 is glycosylated (N-linked (GlcNAc...) asparagine). Positions 383 to 395 (NTTSVPPNKASSM) are enriched in low complexity. Residues 396–407 (PAPPPPPPPPPG) show a composition bias toward pro residues. Positions 408–422 (AFSTSSALSASSIPL) are enriched in low complexity. The span at 423–432 (APLPPPPPPS) shows a compositional bias: pro residues. Over residues 447 to 469 (LTTNKPSASSKQSKISSSSSSSA) the composition is skewed to low complexity. A compositionally biased stretch (basic and acidic residues) spans 502-516 (DKQEDVIGSSKDDNV). The span at 518 to 534 (PSPISPSINPPKQSSQN) shows a compositional bias: low complexity. The residue at position 519 (serine 519) is a Phosphoserine. The span at 557–579 (APPPHTDAMAPPLPPSAPPPPIT) shows a compositional bias: pro residues. Basic and acidic residues predominate over residues 588–597 (GDDHTNDKSE). Positions 649–661 (PPSPPVAAAPPLP) are enriched in pro residues. A compositionally biased stretch (polar residues) spans 713–737 (MDTGTSNSPSKNLKQRLFSTGGSTL). Position 762 is a phosphoserine (serine 762). N-linked (GlcNAc...) asparagine glycosylation is found at asparagine 784 and asparagine 796. The tract at residues 786–806 (SQMPKPRPFQNKTKLYPSGKG) is disordered.

It belongs to the verprolin family. N-glycosylated.

The protein localises to the cytoplasm. Its subcellular location is the cytoskeleton. Functionally, involved in cytoskeletal organization and cellular growth. May exert its effects on the cytoskeleton directly, or indirectly via proline-binding proteins (e.g. profilin) or proteins possessing SH3 domains. This chain is Verprolin (VRP1), found in Saccharomyces cerevisiae (strain ATCC 204508 / S288c) (Baker's yeast).